A 350-amino-acid chain; its full sequence is Uroporphyrinogen decarboxylase (350 aa).

Residues 27–31 (RQAGR), phenylalanine 46, aspartate 76, tyrosine 152, serine 207, and histidine 321 each bind substrate.

Belongs to the uroporphyrinogen decarboxylase family. In terms of assembly, homodimer.

The protein localises to the cytoplasm. The catalysed reaction is uroporphyrinogen III + 4 H(+) = coproporphyrinogen III + 4 CO2. It participates in porphyrin-containing compound metabolism; protoporphyrin-IX biosynthesis; coproporphyrinogen-III from 5-aminolevulinate: step 4/4. In terms of biological role, catalyzes the decarboxylation of four acetate groups of uroporphyrinogen-III to yield coproporphyrinogen-III. In Listeria innocua serovar 6a (strain ATCC BAA-680 / CLIP 11262), this protein is Uroporphyrinogen decarboxylase.